We begin with the raw amino-acid sequence, 356 residues long: Heparan sulfate 2-O-sulfotransferase 1 (356 aa).

The Cytoplasmic portion of the chain corresponds to 1-11 (MGLLRIMMPPK). Residues 12–28 (LQLLAVLTFGVLMLFLE) traverse the membrane as a helical; Signal-anchor for type II membrane protein segment. The stretch at 24–51 (MLFLENQIQNLEESREKLERAIARHEVR) forms a coiled coil. The Lumenal segment spans residues 29–356 (NQIQNLEESR…FYEKIYPKSN (328 aa)). K83, T84, A85, S86, T87, and S88 together coordinate adenosine 3',5'-bisphosphate. N-linked (GlcNAc...) asparagine glycosylation is found at N108 and N127. Residues H140 and H142 contribute to the active site. Residues R164 and S172 each coordinate adenosine 3',5'-bisphosphate. 2 disulfides stabilise this stretch: C201–C209 and C222–C228. 4 residues coordinate adenosine 3',5'-bisphosphate: Y279, S285, T290, and K293.

The protein belongs to the sulfotransferase 3 family. Homotrimer.

The protein resides in the golgi apparatus membrane. Its function is as follows. Catalyzes the transfer of a sulfo group from 3'-phospho-5'-adenylyl sulfate (PAPS) to the 2-OH position of iduronic acid (IdoA) or glucuronic acid (GlcA) within the heparan sulfate (HS) chain and participates in HS biosynthesis. This chain is Heparan sulfate 2-O-sulfotransferase 1, found in Xenopus laevis (African clawed frog).